The primary structure comprises 397 residues: 4-hydroxyphenylpyruvate dioxygenase (397 aa).

2 consecutive VOC domains span residues 18-149 (NFHH…FVEY) and 181-339 (FIDH…IFTK). Fe cation-binding residues include H184, H267, and E350.

It belongs to the 4HPPD family. Homodimer. Fe cation serves as cofactor.

It localises to the cytoplasm. It is found in the endoplasmic reticulum membrane. Its subcellular location is the golgi apparatus membrane. The catalysed reaction is 3-(4-hydroxyphenyl)pyruvate + O2 = homogentisate + CO2. It functions in the pathway amino-acid degradation; L-phenylalanine degradation; acetoacetate and fumarate from L-phenylalanine: step 3/6. Its function is as follows. Catalyzes the conversion of 4-hydroxyphenylpyruvic acid to homogentisic acid, one of the steps in tyrosine catabolism. The polypeptide is 4-hydroxyphenylpyruvate dioxygenase (hpd) (Danio rerio (Zebrafish)).